A 91-amino-acid polypeptide reads, in one-letter code: Ice-structuring protein 2A7 (91 aa).

Residues 1–21 (MALSLFTVGQLIFLFWTMRIT) form the signal peptide. Residues 22–39 (EANPDPAAKAVPAAAAPD) constitute a propeptide, removed by a dipeptidylpeptidase.

This sequence belongs to the type-I AFP family. In terms of tissue distribution, detected in blood serum (at protein level).

The protein resides in the secreted. Contributes to protect fish blood from freezing at subzero sea water temperatures. Lowers the blood freezing point. Binds to nascent ice crystals and prevents further growth. This chain is Ice-structuring protein 2A7, found in Pseudopleuronectes americanus (Winter flounder).